The chain runs to 63 residues: Large ribosomal subunit protein bL32 (63 aa).

Positions 1 to 20 (MANPKAKMSKSRRDKRRAQF) are disordered. A compositionally biased stretch (basic residues) spans 7-18 (KMSKSRRDKRRA).

Belongs to the bacterial ribosomal protein bL32 family.

The protein is Large ribosomal subunit protein bL32 of Chlorobaculum parvum (strain DSM 263 / NCIMB 8327) (Chlorobium vibrioforme subsp. thiosulfatophilum).